We begin with the raw amino-acid sequence, 167 residues long: T-cell surface glycoprotein CD3 delta chain (167 aa).

A signal peptide spans 1 to 21; the sequence is MEHSRCLSCLILAALLSQVNP. The Extracellular segment spans residues 22-100; the sequence is RALEVLEAED…NCVELDSATL (79 aa). C37 and C73 are disulfide-bonded. Residues N38 and N55 are each glycosylated (N-linked (GlcNAc...) asparagine). Residues 101–121 traverse the membrane as a helical segment; the sequence is AGLIITDIIATVLLALGVYCF. Residues 122–167 are Cytoplasmic-facing; the sequence is AGHETGRFSRAADTQVLMGNDQLYQPLRERNDAQYSRLGDKWARNK. Positions 134-162 constitute an ITAM domain; it reads DTQVLMGNDQLYQPLRERNDAQYSRLGDK. Phosphotyrosine is present on residues Y145 and Y156.

In terms of assembly, the TCR-CD3 complex is composed of a CD3D/CD3E and a CD3G/CD3E heterodimers that preferentially associate with TCRalpha and TCRbeta, respectively, to form TCRalpha/CD3E/CD3G and TCRbeta/CD3G/CD3E trimers. In turn, the hexamer interacts with CD3Z homodimer to form the TCR-CD3 complex. Alternatively, TCRalpha and TCRbeta can be replaced by TCRgamma and TCRdelta. Interacts with coreceptors CD4 and CD8. Phosphorylated on Tyr residues after T-cell receptor triggering by LCK in association with CD4/CD8. As to expression, CD3D is mostly present on T-lymphocytes with its TCR-CD3 partners. Present also in fetal NK-cells.

It localises to the cell membrane. Its function is as follows. Part of the TCR-CD3 complex present on T-lymphocyte cell surface that plays an essential role in adaptive immune response. When antigen presenting cells (APCs) activate T-cell receptor (TCR), TCR-mediated signals are transmitted across the cell membrane by the CD3 chains CD3D, CD3E, CD3G and CD3Z. All CD3 chains contain immunoreceptor tyrosine-based activation motifs (ITAMs) in their cytoplasmic domain. Upon TCR engagement, these motifs become phosphorylated by Src family protein tyrosine kinases LCK and FYN, resulting in the activation of downstream signaling pathways. In addition of this role of signal transduction in T-cell activation, CD3D plays an essential role in thymocyte differentiation. Indeed, participates in correct intracellular TCR-CD3 complex assembly and surface expression. In absence of a functional TCR-CD3 complex, thymocytes are unable to differentiate properly. Interacts with CD4 and CD8 and thus serves to establish a functional link between the TCR and coreceptors CD4 and CD8, which is needed for activation and positive selection of CD4 or CD8 T-cells. This is T-cell surface glycoprotein CD3 delta chain (CD3D) from Ovis aries (Sheep).